A 391-amino-acid chain; its full sequence is Carbamoyl phosphate synthase small chain (391 aa).

A CPSase region spans residues 1–199 (MVRISGFCCA…TWEFIEGPTT (199 aa)). L-glutamine-binding residues include Ser-61, Gly-251, and Gly-253. Residues 203–388 (TVVAIDFGVK…VALMRDRQPT (186 aa)) enclose the Glutamine amidotransferase type-1 domain. Cys-279 serves as the catalytic Nucleophile. Residues Leu-280, Gln-283, Asn-319, Gly-321, and Phe-322 each contribute to the L-glutamine site. Catalysis depends on residues His-361 and Glu-363.

Belongs to the CarA family. In terms of assembly, composed of two chains; the small (or glutamine) chain promotes the hydrolysis of glutamine to ammonia, which is used by the large (or ammonia) chain to synthesize carbamoyl phosphate. Tetramer of heterodimers (alpha,beta)4.

The catalysed reaction is hydrogencarbonate + L-glutamine + 2 ATP + H2O = carbamoyl phosphate + L-glutamate + 2 ADP + phosphate + 2 H(+). The enzyme catalyses L-glutamine + H2O = L-glutamate + NH4(+). Its pathway is amino-acid biosynthesis; L-arginine biosynthesis; carbamoyl phosphate from bicarbonate: step 1/1. It functions in the pathway pyrimidine metabolism; UMP biosynthesis via de novo pathway; (S)-dihydroorotate from bicarbonate: step 1/3. Small subunit of the glutamine-dependent carbamoyl phosphate synthetase (CPSase). CPSase catalyzes the formation of carbamoyl phosphate from the ammonia moiety of glutamine, carbonate, and phosphate donated by ATP, constituting the first step of 2 biosynthetic pathways, one leading to arginine and/or urea and the other to pyrimidine nucleotides. The small subunit (glutamine amidotransferase) binds and cleaves glutamine to supply the large subunit with the substrate ammonia. The chain is Carbamoyl phosphate synthase small chain from Synechococcus sp. (strain ATCC 27144 / PCC 6301 / SAUG 1402/1) (Anacystis nidulans).